We begin with the raw amino-acid sequence, 183 residues long: ATP-dependent protease subunit HslV (183 aa).

Residue T7 is part of the active site. Residues G162, C165, and T168 each coordinate Na(+).

Belongs to the peptidase T1B family. HslV subfamily. A double ring-shaped homohexamer of HslV is capped on each side by a ring-shaped HslU homohexamer. The assembly of the HslU/HslV complex is dependent on binding of ATP.

The protein resides in the cytoplasm. It carries out the reaction ATP-dependent cleavage of peptide bonds with broad specificity.. Allosterically activated by HslU binding. Functionally, protease subunit of a proteasome-like degradation complex believed to be a general protein degrading machinery. In Alkalilimnicola ehrlichii (strain ATCC BAA-1101 / DSM 17681 / MLHE-1), this protein is ATP-dependent protease subunit HslV.